The sequence spans 515 residues: Protein FAM98A (515 aa).

Disordered regions lie at residues 297–411 and 432–515; these read VLMG…YHGG and SGYQ…HYTS. Residues 302 to 311 are compositionally biased toward basic and acidic residues; it reads VPDRGGRPNE. Positions 382–395 are enriched in gly residues; sequence WTDGGSASGGGYQD. The segment covering 444–456 has biased composition (basic and acidic residues); it reads RYQDGGHHGERGS. A compositionally biased stretch (gly residues) spans 457–481; the sequence is GRGGRGGRGGRGGRGSQGGGWGGRG. Over residues 485 to 501 the composition is skewed to low complexity; the sequence is YHQGGQFEQHFQHGGYQ. The segment covering 502–515 has biased composition (polar residues); that stretch reads YSHSGFGQGRHYTS.

This sequence belongs to the FAM98 family. In terms of assembly, interacts (via N- and C-terminus) with DDX1. Interacts (via N- and C-terminus) with C14orf166. Interacts with FAM98B. Interacts with PLEKHM1 (via N- and C-terminus).

In terms of biological role, positively stimulates PRMT1-induced protein arginine methylation. Involved in skeletal homeostasis. Positively regulates lysosome peripheral distribution and ruffled border formation in osteoclasts. This is Protein FAM98A from Rattus norvegicus (Rat).